A 419-amino-acid chain; its full sequence is Gamma-glutamyl phosphate reductase (419 aa).

It belongs to the gamma-glutamyl phosphate reductase family.

The protein resides in the cytoplasm. The enzyme catalyses L-glutamate 5-semialdehyde + phosphate + NADP(+) = L-glutamyl 5-phosphate + NADPH + H(+). Its pathway is amino-acid biosynthesis; L-proline biosynthesis; L-glutamate 5-semialdehyde from L-glutamate: step 2/2. Its function is as follows. Catalyzes the NADPH-dependent reduction of L-glutamate 5-phosphate into L-glutamate 5-semialdehyde and phosphate. The product spontaneously undergoes cyclization to form 1-pyrroline-5-carboxylate. In Bordetella parapertussis (strain 12822 / ATCC BAA-587 / NCTC 13253), this protein is Gamma-glutamyl phosphate reductase.